The following is a 397-amino-acid chain: MIIKPRVRGFICVTTHPAGCAASVREQIAYVARRGPIERGPKKVLVIGASTGYGLAARIAAAFGVGAATLGVFFERAPADAKPGTAGWYNSAAFHDEAAARGLQATSVNGDAFSDEIKHKTIDAIRRDLGQVDLVVYSVAAPRRTHPKTGVTHQSTLKPIGHAVRLRGIDTDNEAIKETLLQPATPDEIADTVAVMGGEDWRMWIDALDAAGVLADGAKTTAFTYLGEQVTHDIYWNGSIGEAKKDLDRTVLALRGKLAARGGDARVSVLKAVVTQASSAIPMMPLYLSLLFKVMKARGTHEGCIEQVDGLLRDSLYSAQPHVDAEGRLRADRLELDPAVQARVLELWDQVTDDNLYTLTDFAGYKAEFLRLFGFGIDGVDYDAPVEPNVRIPNLIE.

NAD(+) contacts are provided by residues 48–53, 74–75, 111–112, and 139–140; these read GASTGY, FE, DA, and VA. Residue Tyr225 participates in substrate binding. Residue Tyr235 is the Proton donor of the active site. Residues Lys244 and 273-275 each bind NAD(+); that span reads VVT.

Belongs to the TER reductase family. Monomer.

The catalysed reaction is a 2,3-saturated acyl-[ACP] + NAD(+) = a (2E)-enoyl-[ACP] + NADH + H(+). It participates in lipid metabolism; fatty acid biosynthesis. In terms of biological role, involved in the final reduction of the elongation cycle of fatty acid synthesis (FAS II). Catalyzes the reduction of a carbon-carbon double bond in an enoyl moiety that is covalently linked to an acyl carrier protein (ACP). This Burkholderia mallei (strain SAVP1) protein is Enoyl-[acyl-carrier-protein] reductase [NADH].